The chain runs to 762 residues: Protein PHTF1 (762 aa).

Residues 6–150 (RDAISWYQKK…VHCQIVSTQI (145 aa)) enclose the PHTF domain. 3 helical membrane-spanning segments follow: residues 77–97 (GLVR…VTSL), 99–119 (IFVW…LYFM), and 121–141 (PIVN…MGTV). Residues 152–188 (RPSGNNGNRRRRKLRKTVNGDGSRENGNNSSDKARGV) form a disordered region. N-linked (GlcNAc...) asparagine glycosylation is found at N179, N180, and N197. Residues S272, S276, S277, S334, and S336 each carry the phosphoserine modification. Disordered stretches follow at residues 344–379 (SAAF…SETE) and 393–415 (RSSV…TKRD). Over residues 348–361 (SQGSRSGMSGGSRS) the composition is skewed to low complexity. The segment covering 365–376 (LRRDSESTRHDS) has biased composition (basic and acidic residues). N-linked (GlcNAc...) asparagine glycosylation occurs at N431. A run of 4 helical transmembrane segments spans residues 473–493 (GVGY…FPFL), 512–532 (EILT…LSII), 611–631 (VVVS…CAQV), and 645–665 (WEFL…ASLG). N-linked (GlcNAc...) asparagine glycosylation is found at N674 and N733. Residues 737–757 (VVILSAVSGVISDLLGFNIRL) form a helical membrane-spanning segment.

In terms of assembly, interacts with FEM1B.

The protein resides in the endoplasmic reticulum membrane. It is found in the golgi apparatus. Its subcellular location is the cis-Golgi network membrane. The protein is Protein PHTF1 (PHTF1) of Bos taurus (Bovine).